The chain runs to 82 residues: MSPKVQALLLLVGLITFLAVHAEEELSETVESERSCAKEYQWCDWNTRPCCDNISCICSWIGTNCECKKGIIRTIKDWYKGK.

The signal sequence occupies residues 1–22 (MSPKVQALLLLVGLITFLAVHA). The propeptide occupies 23-34 (EEELSETVESER). 4 disulfide bridges follow: Cys36–Cys51, Cys43–Cys56, Cys50–Cys67, and Cys58–Cys65.

This sequence belongs to the neurotoxin 02 (plectoxin) family. 04 (U16-lycotoxin) subfamily. In terms of tissue distribution, expressed by the venom gland.

The protein localises to the secreted. This chain is U16-lycotoxin-Ls1a, found in Lycosa singoriensis (Wolf spider).